The sequence spans 204 residues: Outer-membrane lipoprotein carrier protein (204 aa).

The first 21 residues, 1–21, serve as a signal peptide directing secretion; that stretch reads MKKYLNLTALLLVGISNVTWA.

The protein belongs to the LolA family. In terms of assembly, monomer.

It localises to the periplasm. Its function is as follows. Participates in the translocation of lipoproteins from the inner membrane to the outer membrane. Only forms a complex with a lipoprotein if the residue after the N-terminal Cys is not an aspartate (The Asp acts as a targeting signal to indicate that the lipoprotein should stay in the inner membrane). This is Outer-membrane lipoprotein carrier protein from Histophilus somni (strain 2336) (Haemophilus somnus).